Reading from the N-terminus, the 231-residue chain is NADH-ubiquinone oxidoreductase chain 4 (231 aa).

6 helical membrane-spanning segments follow: residues 1–21 (PIAGSMVLAAILLKLGGYGII), 34–54 (MFLPFIVLALWGATLANLTCL), 62–84 (LIAYSSISHMGLVVATIIIQTPW), 89–111 (AMALMIAHGFTSSALFCLANTTY), 128–148 (ILPMATTWWLLANLMNIAIPP), and 169–189 (TIIMLGLSMLITASYSLHMFL).

Belongs to the complex I subunit 4 family.

The protein localises to the mitochondrion membrane. The catalysed reaction is a ubiquinone + NADH + 5 H(+)(in) = a ubiquinol + NAD(+) + 4 H(+)(out). Functionally, core subunit of the mitochondrial membrane respiratory chain NADH dehydrogenase (Complex I) that is believed to belong to the minimal assembly required for catalysis. Complex I functions in the transfer of electrons from NADH to the respiratory chain. The immediate electron acceptor for the enzyme is believed to be ubiquinone. The protein is NADH-ubiquinone oxidoreductase chain 4 (MT-ND4) of Bothrops erythromelas (Caatinga lance head).